The following is a 438-amino-acid chain: MYLIADWRRTHYSKDVIPEMDGQEVTLMGWVHSIRALGKLAFVILRDRAGTIQAVVPKQKVDEETFEIAKKLGKEDIVAIKGKVVANEKAPKGFEVIPIEIRVLNKADAPLPLDPSEKVSAEIDTRLDKRFLDIRRPKIQAIFKIRSEMLKSIRKTFADEGFIEVNTPKLVASATEGGTELFPISYFEKEAFLGQSPQLYKQMMMAGGFDKVFEIAQIFRAEEHNTRRHLNEAISIDSEMSFVNEKDAMAMLEKVVYNCYSDIEYNRPNEIELLELNWEIPEKTFDKVTYTEAIDIAIAKGVEIEWGEDLSRAAERAVGDEMGGLYFITEWPTQTRPFYTLPHKHDNKVCKAFDLMYKELEISSGAQRVHKYDLLVQNISNMGLNPDSFETYLEAFKYGMPPHAGWGLGADRFAMVLTAQDNIRECVLFPRDRQRLTP.

Residue glutamate 176 coordinates L-aspartate. The aspartate stretch occupies residues 198-201 (QLYK). Arginine 220 provides a ligand contact to L-aspartate. Residues 220–222 (RAE), 228–230 (RHL), and glutamate 361 contribute to the ATP site. Positions 361 and 364 each coordinate Mg(2+). The L-aspartate site is built by serine 364 and arginine 368. 409 to 412 (GADR) is an ATP binding site.

The protein belongs to the class-II aminoacyl-tRNA synthetase family. Type 2 subfamily. Homodimer. It depends on Mg(2+) as a cofactor.

It localises to the cytoplasm. The catalysed reaction is tRNA(Asx) + L-aspartate + ATP = L-aspartyl-tRNA(Asx) + AMP + diphosphate. Aspartyl-tRNA synthetase with relaxed tRNA specificity since it is able to aspartylate not only its cognate tRNA(Asp) but also tRNA(Asn). Reaction proceeds in two steps: L-aspartate is first activated by ATP to form Asp-AMP and then transferred to the acceptor end of tRNA(Asp/Asn). This Methanococcus maripaludis (strain DSM 14266 / JCM 13030 / NBRC 101832 / S2 / LL) protein is Aspartate--tRNA(Asp/Asn) ligase.